Consider the following 356-residue polypeptide: tRNA N6-adenosine threonylcarbamoyltransferase (356 aa).

His110 and His114 together coordinate Fe cation. Residues 132-136 (LVSGG), Asp165, Gly178, Asp182, and Asn288 each bind substrate. Asp316 is a Fe cation binding site.

This sequence belongs to the KAE1 / TsaD family. It depends on Fe(2+) as a cofactor.

It localises to the cytoplasm. It carries out the reaction L-threonylcarbamoyladenylate + adenosine(37) in tRNA = N(6)-L-threonylcarbamoyladenosine(37) in tRNA + AMP + H(+). Required for the formation of a threonylcarbamoyl group on adenosine at position 37 (t(6)A37) in tRNAs that read codons beginning with adenine. Is involved in the transfer of the threonylcarbamoyl moiety of threonylcarbamoyl-AMP (TC-AMP) to the N6 group of A37, together with TsaE and TsaB. TsaD likely plays a direct catalytic role in this reaction. The chain is tRNA N6-adenosine threonylcarbamoyltransferase from Maridesulfovibrio salexigens (strain ATCC 14822 / DSM 2638 / NCIMB 8403 / VKM B-1763) (Desulfovibrio salexigens).